The following is a 721-amino-acid chain: MKFGQLLKETLMYEYKYSYVNYDKLKKEIKRRNDQGGWSEEDESDFVELLEKELDKVYSFQKNKSAEVMERIRFCEEQTDEVVRRLDSDNPPNENDFAILETELTDIMATVHDLAKFSELNYTAFYKIIKKHDKHTGWILKPVFAARLNAKPFFKEQYDLLVVKLSKLYDFVRTRGSPIKGDSAAGGTQQNFVRQTTKYWVHPNNVTELKIYILKHLPVLVFNPNKEFAREDAAITSIYYDNDDLDFYLGRLEKREGAEAIRLRWYGNMDNNNIFVERKTHREDWTGEKSVKARFPLKEKYVNAFLRGDYTVEEAFAKMRKDGKKSLKEIESLERLAKEVQYTVLSRGMKPYVRSFYERTAFQLPGDARVRISLDTNLSLIREDGPSRAGNNWRRMDIGIDYPFDQLPDEDIVRFPYAILEVKLQTQFGQDPPEWVNNLVNSHLVEAVPKFSKFIHGVSTLFYDRVTLLPYWFPQMDIDIRKPATHTFIQGRSQSGTHSSSVSANVLTDSENTPIHADGDNYVDEESRIGSSSTRNDNSTFQTSDSFQELDERTNLLDISKRKGRDSFVAALNSRLKDIKDSFFLETVPKFEEPTEPTVIYEQKYVSPPGKRIYVPVRVEPKTYFALERTYLDYLRYSILMGSIGITLFSFAKTRSGILGAASFTLVALFAIFYSTFLYLWRAVNIAKHNAVRYDDRFGPTAICVITFAAISANVILNFNA.

An SPX domain is found at 1–146; it reads MKFGQLLKET…GWILKPVFAA (146 aa). Residues 1 to 631 are Cytoplasmic-facing; it reads MKFGQLLKET…KTYFALERTY (631 aa). 7 residues coordinate ATP: Lys-198, Arg-262, Arg-264, Lys-279, Lys-292, Tyr-357, and Arg-359. Glu-421 is a Mn(2+) binding site. Lys-453 is a catalytic residue. Composition is skewed to polar residues over residues 490–513 and 529–547; these read QGRS…SENT and IGSS…SDSF. Residues 490–547 are disordered; sequence QGRSQSGTHSSSVSANVLTDSENTPIHADGDNYVDEESRIGSSSTRNDNSTFQTSDSF. Residue Ser-495 is modified to Phosphoserine. Thr-497 carries the phosphothreonine modification. At Ser-501 the chain carries Phosphoserine. At Thr-534 the chain carries Phosphothreonine. Ser-546 carries the post-translational modification Phosphoserine. A helical membrane pass occupies residues 632–652; it reads LDYLRYSILMGSIGITLFSFA. At 653–657 the chain is on the vacuolar side; sequence KTRSG. A helical transmembrane segment spans residues 658 to 678; it reads ILGAASFTLVALFAIFYSTFL. At 679–697 the chain is on the cytoplasmic side; it reads YLWRAVNIAKHNAVRYDDR. A helical membrane pass occupies residues 698 to 718; it reads FGPTAICVITFAAISANVILN. The Vacuolar portion of the chain corresponds to 719–721; the sequence is FNA.

This sequence belongs to the VTC4 family. In terms of assembly, the VTC core complex is an integral membrane heterooligomer composed of at least the catalytic subunit vtc4 and the accessory subunits vtc1 and vtc2. vtc1 is a small membrane protein without hydrophilic domain. Vtc2 and vtc4 are related and have 2 hydrophilic domains that face the cytosol, an N-terminal SPX domain and the central core domain. The central core in vtc4 is the catalytic domain. Requires Mn(2+) as cofactor.

The protein resides in the vacuole membrane. It catalyses the reaction [phosphate](n) + ATP = [phosphate](n+1) + ADP. With respect to regulation, activity of the enzyme is Mn(2+)-dependent and enhanced in the presence of pyrophosphate (PPi). Catalytic subunit of the vacuolar transporter chaperone (VTC) complex. The VTC complex acts as a vacuolar polyphosphate polymerase that catalyzes the synthesis of inorganic polyphosphate (polyP) via transfer of phosphate from ATP to a growing polyP chain, releasing ADP. VTC exposes its catalytic domain vtc4 to the cytosol, where the growing polyP chain winds through a tunnel-shaped pocket, integrating cytoplasmic polymer synthesis with polyP membrane translocation. The VTC complex carries 9 vacuolar transmembrane domains, which are likely to constitute the translocation channel into the organelle lumen. PolyP synthesis is tightly coupled to its transport into the vacuole lumen, in order to avoid otherwise toxic intermediates in the cytosol, and it depends on the proton gradient across the membrane, formed by V-ATPase. The VTC complex also plays a role in vacuolar membrane fusion. The protein is Vacuolar transporter chaperone complex subunit 4 (vtc4) of Schizosaccharomyces pombe (strain 972 / ATCC 24843) (Fission yeast).